The chain runs to 190 residues: Cytoglobin (190 aa).

The interval 1–21 is disordered; it reads MEKVPGDMEIERRERSEELSE. A Globin domain is found at 18–167; it reads ELSEAERKAV…IYSHVTAAYK (150 aa). Cysteines 38 and 83 form a disulfide. Positions 81 and 113 each coordinate heme b.

Belongs to the globin family. Monomeric. Homodimer; disulfide-linked in vitro. Also homooligomeric in vitro. In terms of processing, the formation of an intramolecular disulfide bond between cysteines Cys-38 and Cys-83 specifically enhances the nitrite reductase activity. As to expression, expressed in brain and retina by non-neuronal cells (at protein level). This is the major globin expressed in vascular smooth muscle and is not present in the endothelium (at protein level).

It is found in the cytoplasm. It localises to the nucleus. The enzyme catalyses Fe(II)-heme b-[protein] + nitric oxide + O2 = Fe(III)-heme b-[protein] + nitrate. It carries out the reaction 2 superoxide + 2 H(+) = H2O2 + O2. The catalysed reaction is Fe(III)-heme b-[protein] + nitric oxide + H2O = Fe(II)-heme b-[protein] + nitrite + 2 H(+). It catalyses the reaction H2O2 + AH2 = A + 2 H2O. Its activity is regulated as follows. The nitric oxide dioxygenase activity is activated by a reducing system composed of cytochrome b5, its upstream reductase CYB5R3 and NADH. Probable multifunctional globin with a hexacoordinated heme iron required for the catalysis of various reactions depending on redox condition of the cell as well as oxygen availability. Has a nitric oxide dioxygenase (NOD) activity and is most probably involved in cell-mediated and oxygen-dependent nitric oxide consumption. By scavenging this second messenger may regulate several biological processes including endothelium-mediated vasodilation and vascular tone. Under normoxic conditions functions as a nitric oxide dioxygenase (NOD) but under hypoxic conditions the globin may switch its function to that of a nitrite (NO2) reductase (NiR), generating nitric oxide. Could also have peroxidase and superoxide dismutase activities, detoxifying reactive oxygen species and protecting cells against oxidative stress. Also binds dioxygen with low affinity and could function as an oxygen sensor but has probably no function as a respiratory oxygen carrier. This chain is Cytoglobin, found in Mus musculus (Mouse).